The sequence spans 441 residues: MFS-type transporter (441 aa).

Residues 1–47 form a disordered region; that stretch reads MPPQQEQDTDSDAIRSYNEESKSETPGCIPDAMLSSDETSNDVASDI. The next 10 membrane-spanning stretches (helical) occupy residues 61-81, 95-115, 125-145, 150-170, 183-203, 212-232, 259-279, 289-309, 323-343, and 351-371; these read TLCGHFLFMNTWGFINSFGIF, DISWIGSIQVFLSFFVGAFVG, LVLSCGTILVLIGIFTASLST, LILSQGICCGLGNGFLVTPAV, LAIGISTCGSVTGALVFNSMA, FGWTMRAIGFVQAATLLFVVV, FFTIGMFFNFWAVFFGYYYIA, TLTYTQSLNLLLILNGVGVFG, LELLIPTCLVAAVATFSWIAV, and VWTVFYGIIGGSILSLFPAGI. The N-linked (GlcNAc...) asparagine glycan is linked to Asn388. The next 2 helical transmembrane spans lie at 389–409 and 415–435; these read FTVISFATLTGNPIAGAIITA and YGAQAFMGSSFIVGTAFIVAA.

Belongs to the major facilitator superfamily. Monocarboxylate porter (TC 2.A.1.13) family.

It is found in the membrane. MFS-type transporter; part of the gene cluster that mediates the biosynthesis of butenolide, a mycotoxin that shows antibiotic activity but does not seem to play a major role in the spread of head blight in wheat. The protein is MFS-type transporter of Gibberella zeae (strain ATCC MYA-4620 / CBS 123657 / FGSC 9075 / NRRL 31084 / PH-1) (Wheat head blight fungus).